A 167-amino-acid chain; its full sequence is NAD(P)H-quinone oxidoreductase subunit I, chloroplastic (167 aa).

2 4Fe-4S ferredoxin-type domains span residues 55–84 (GRIH…VDWK) and 95–124 (LNYS…MTEE). [4Fe-4S] cluster contacts are provided by Cys64, Cys67, Cys70, Cys74, Cys104, Cys107, Cys110, and Cys114.

It belongs to the complex I 23 kDa subunit family. NDH is composed of at least 16 different subunits, 5 of which are encoded in the nucleus. [4Fe-4S] cluster serves as cofactor.

It localises to the plastid. It is found in the chloroplast thylakoid membrane. The enzyme catalyses a plastoquinone + NADH + (n+1) H(+)(in) = a plastoquinol + NAD(+) + n H(+)(out). It catalyses the reaction a plastoquinone + NADPH + (n+1) H(+)(in) = a plastoquinol + NADP(+) + n H(+)(out). Its function is as follows. NDH shuttles electrons from NAD(P)H:plastoquinone, via FMN and iron-sulfur (Fe-S) centers, to quinones in the photosynthetic chain and possibly in a chloroplast respiratory chain. The immediate electron acceptor for the enzyme in this species is believed to be plastoquinone. Couples the redox reaction to proton translocation, and thus conserves the redox energy in a proton gradient. The protein is NAD(P)H-quinone oxidoreductase subunit I, chloroplastic of Aethionema grandiflorum (Persian stone-cress).